Here is a 271-residue protein sequence, read N- to C-terminus: Ribosomal RNA small subunit methyltransferase A (271 aa).

Asn-18, Leu-20, Gly-45, Glu-66, Asp-91, and Asn-112 together coordinate S-adenosyl-L-methionine.

It belongs to the class I-like SAM-binding methyltransferase superfamily. rRNA adenine N(6)-methyltransferase family. RsmA subfamily.

It is found in the cytoplasm. The enzyme catalyses adenosine(1518)/adenosine(1519) in 16S rRNA + 4 S-adenosyl-L-methionine = N(6)-dimethyladenosine(1518)/N(6)-dimethyladenosine(1519) in 16S rRNA + 4 S-adenosyl-L-homocysteine + 4 H(+). Its function is as follows. Specifically dimethylates two adjacent adenosines (A1518 and A1519) in the loop of a conserved hairpin near the 3'-end of 16S rRNA in the 30S particle. May play a critical role in biogenesis of 30S subunits. The protein is Ribosomal RNA small subunit methyltransferase A of Vibrio cholerae serotype O1 (strain ATCC 39315 / El Tor Inaba N16961).